The sequence spans 100 residues: UPF0473 protein LMHCC_1068 (100 aa).

Belongs to the UPF0473 family.

This Listeria monocytogenes serotype 4a (strain HCC23) protein is UPF0473 protein LMHCC_1068.